A 290-amino-acid polypeptide reads, in one-letter code: Enoyl-CoA hydratase, mitochondrial (290 aa).

The transit peptide at 1-29 (MAALRALLPRACNSLLSPVRCPEFRRFAS) directs the protein to the mitochondrion. 98–101 (ADIK) serves as a coordination point for substrate. Residues Lys-101 and Lys-115 each carry the N6-acetyllysine; alternate modification. An N6-succinyllysine; alternate mark is found at Lys-101 and Lys-115. Gly-141 lines the substrate pocket. Lys-204 carries the post-translational modification N6-succinyllysine. Residue Lys-211 is modified to N6-acetyllysine.

Belongs to the enoyl-CoA hydratase/isomerase family. As to quaternary structure, homohexamer; dimer of trimers. In terms of tissue distribution, detected in liver (at protein level).

It localises to the mitochondrion matrix. The enzyme catalyses a (3S)-3-hydroxyacyl-CoA = a (2E)-enoyl-CoA + H2O. It catalyses the reaction a (3E)-enoyl-CoA = a 4-saturated (2E)-enoyl-CoA. The catalysed reaction is (3E)-hexenoyl-CoA = (2E)-hexenoyl-CoA. It carries out the reaction (3S)-3-hydroxybutanoyl-CoA = (2E)-butenoyl-CoA + H2O. The enzyme catalyses 3-hydroxyisovaleryl-CoA = 3-methylbut-2-enoyl-CoA + H2O. It catalyses the reaction 3-hydroxypropanoyl-CoA = acryloyl-CoA + H2O. The catalysed reaction is 3-hydroxybutanoyl-CoA = (2E)-butenoyl-CoA + H2O. It carries out the reaction 2-methylpropenoyl-CoA + H2O = (S)-3-hydroxyisobutanoyl-CoA. The enzyme catalyses (3S)-hydroxyhexanoyl-CoA = (2E)-hexenoyl-CoA + H2O. It catalyses the reaction (3S)-hydroxydecanoyl-CoA = (2E)-decenoyl-CoA + H2O. It participates in lipid metabolism; fatty acid beta-oxidation. Converts unsaturated trans-2-enoyl-CoA species ((2E)-enoyl-CoA) to the corresponding 3(S)-3-hydroxyacyl-CoA species through addition of a water molecule to the double bond. Catalyzes the hydration of medium- and short-chained fatty enoyl-CoA thioesters from 4 carbons long (C4) up to C16. Has high substrate specificity for crotonyl-CoA ((2E)-butenoyl-CoA) and moderate specificity for acryloyl-CoA, 3-methylcrotonyl-CoA (3-methyl-(2E)-butenoyl-CoA) and methacrylyl-CoA ((2E)-2-methylpropenoyl-CoA). Can bind tiglyl-CoA (2-methylcrotonoyl-CoA), but hydrates only a small amount of this substrate. Plays a key role in the beta-oxidation spiral of short- and medium-chain fatty acid oxidation. At a lower rate than the hydratase reaction, catalyzes the isomerase reaction of trans-3-enoyl-CoA species (such as (3E)-hexenoyl-CoA) to trans-2-enoyl-CoA species (such as (2E)-hexenoyl-CoA), which are subsequently hydrated to 3(S)-3-hydroxyacyl-CoA species (such as (3S)-hydroxyhexanoyl-CoA). The protein is Enoyl-CoA hydratase, mitochondrial of Rattus norvegicus (Rat).